We begin with the raw amino-acid sequence, 302 residues long: Dermonecrotic toxin LiSicTox-alphaIA1bii (302 aa).

The signal sequence occupies residues 1 to 14 (ARVVLGCWSVLSQA). The propeptide occupies 15–22 (AQTDDEER). Residue histidine 34 is part of the active site. The Mg(2+) site is built by glutamate 54 and aspartate 56. The Nucleophile role is filled by histidine 70. 2 disulfides stabilise this stretch: cysteine 74–cysteine 80 and cysteine 76–cysteine 219. Aspartate 114 lines the Mg(2+) pocket.

It belongs to the arthropod phospholipase D family. Class II subfamily. Class IIa sub-subfamily. Mg(2+) is required as a cofactor. Expressed by the venom gland.

The protein localises to the secreted. The catalysed reaction is an N-(acyl)-sphingosylphosphocholine = an N-(acyl)-sphingosyl-1,3-cyclic phosphate + choline. The enzyme catalyses an N-(acyl)-sphingosylphosphoethanolamine = an N-(acyl)-sphingosyl-1,3-cyclic phosphate + ethanolamine. It catalyses the reaction a 1-acyl-sn-glycero-3-phosphocholine = a 1-acyl-sn-glycero-2,3-cyclic phosphate + choline. It carries out the reaction a 1-acyl-sn-glycero-3-phosphoethanolamine = a 1-acyl-sn-glycero-2,3-cyclic phosphate + ethanolamine. Dermonecrotic toxins cleave the phosphodiester linkage between the phosphate and headgroup of certain phospholipids (sphingolipid and lysolipid substrates), forming an alcohol (often choline) and a cyclic phosphate. This toxin acts on sphingomyelin (SM). It may also act on ceramide phosphoethanolamine (CPE), lysophosphatidylcholine (LPC) and lysophosphatidylethanolamine (LPE), but not on lysophosphatidylserine (LPS), and lysophosphatidylglycerol (LPG). It acts by transphosphatidylation, releasing exclusively cyclic phosphate products as second products. Induces hemolysis, dermonecrosis, vascular permeability and platelet aggregation. The protein is Dermonecrotic toxin LiSicTox-alphaIA1bii of Loxosceles intermedia (Brown spider).